Consider the following 247-residue polypeptide: Coiled-coil domain-containing protein 124 homolog (247 aa).

Residues 1-146 (MGGKKFGTNS…TTTTGSDDHE (146 aa)) form a disordered region. A coiled-coil region spans residues 8 to 85 (TNSKAEEARS…QEDKEIKERY (78 aa)). Positions 11–114 (KAEEARSKKA…EQKQREKELA (104 aa)) are enriched in basic and acidic residues. Residues 122 to 140 (VVVVPTTTTTTTTTTTTTT) show a composition bias toward low complexity.

It belongs to the CCDC124 family. Associates with translationally inactive ribosomes in the nonrotated state.

Functionally, ribosome-binding protein involved in ribosome hibernation: associates with translationally inactive ribosomes and stabilizes the nonrotated conformation of the 80S ribosome, thereby promoting ribosome preservation and storage. This chain is Coiled-coil domain-containing protein 124 homolog, found in Dictyostelium discoideum (Social amoeba).